We begin with the raw amino-acid sequence, 405 residues long: S-adenosylmethionine synthase (405 aa).

Residue 139–144 (GQGSVD) coordinates ATP.

The protein belongs to the AdoMet synthase 2 family. Requires Mg(2+) as cofactor.

It catalyses the reaction L-methionine + ATP + H2O = S-adenosyl-L-methionine + phosphate + diphosphate. It functions in the pathway amino-acid biosynthesis; S-adenosyl-L-methionine biosynthesis; S-adenosyl-L-methionine from L-methionine: step 1/1. In terms of biological role, catalyzes the formation of S-adenosylmethionine from methionine and ATP. This chain is S-adenosylmethionine synthase, found in Thermococcus gammatolerans (strain DSM 15229 / JCM 11827 / EJ3).